Here is a 51-residue protein sequence, read N- to C-terminus: uncharacterized protein (51 aa).

The chain crosses the membrane as a helical span at residues 20–42 (NFFSRMWNAVVFGFGAAIGASVA).

It is found in the membrane. This is an uncharacterized protein from Schizosaccharomyces pombe (strain 972 / ATCC 24843) (Fission yeast).